A 526-amino-acid polypeptide reads, in one-letter code: Tyrosine-protein kinase transforming protein Src (526 aa).

The interval 1-52 (MGSSKSKPKDPSQRRHSLEPPDSTHHGGFPASQTPDETAAPDAHRNPSRSFG) is disordered. The N-myristoyl glycine; by host moiety is linked to residue G2. Residues 7–25 (KPKDPSQRRHSLEPPDSTH) show a composition bias toward basic and acidic residues. 2 consecutive SH3 domains span residues 71–139 (TSPQ…YVAP) and 81–142 (GGVT…PSDS). Residues 148 to 245 (WYFGKITRRE…GLCHRLANVC (98 aa)) enclose the SH2 domain. The Protein kinase domain occupies 267 to 517 (LRLEAKLGQG…TFKYLQAQLL (251 aa)). ATP-binding positions include 273-281 (LGQGCFGEV) and K295. D386 acts as the Proton acceptor in catalysis. The residue at position 416 (Y416) is a Phosphotyrosine; by autocatalysis.

Belongs to the protein kinase superfamily. Tyr protein kinase family. SRC subfamily. In terms of assembly, homodimer. The phosphorylated form is termed pp60v-src.

It catalyses the reaction L-tyrosyl-[protein] + ATP = O-phospho-L-tyrosyl-[protein] + ADP + H(+). In terms of biological role, this phosphoprotein, required for both the initiation and the maintenance of neoplastic transformation, is a protein kinase that catalyzes the phosphorylation of tyrosine residues in vitro. This is Tyrosine-protein kinase transforming protein Src (V-SRC) from Gallus gallus (Chicken).